Here is a 117-residue protein sequence, read N- to C-terminus: Small ribosomal subunit protein bS6 (117 aa).

The protein belongs to the bacterial ribosomal protein bS6 family.

Its function is as follows. Binds together with bS18 to 16S ribosomal RNA. The protein is Small ribosomal subunit protein bS6 of Roseobacter denitrificans (strain ATCC 33942 / OCh 114) (Erythrobacter sp. (strain OCh 114)).